Consider the following 275-residue polypeptide: tRNA pseudouridine synthase A (275 aa).

The active-site Nucleophile is Asp-56. Tyr-110 is a substrate binding site.

This sequence belongs to the tRNA pseudouridine synthase TruA family.

The enzyme catalyses uridine(38/39/40) in tRNA = pseudouridine(38/39/40) in tRNA. In terms of biological role, formation of pseudouridine at positions 38, 39 and 40 in the anticodon stem and loop of transfer RNAs. The sequence is that of tRNA pseudouridine synthase A from Haloarcula marismortui (strain ATCC 43049 / DSM 3752 / JCM 8966 / VKM B-1809) (Halobacterium marismortui).